We begin with the raw amino-acid sequence, 354 residues long: Methylthioribose-1-phosphate isomerase (354 aa).

Residues Arg-58–Ala-60, Arg-101, and Gln-204 each bind substrate. The active-site Proton donor is the Asp-245. Position 255-256 (Asn-255–Lys-256) interacts with substrate.

Belongs to the eIF-2B alpha/beta/delta subunits family. MtnA subfamily.

It carries out the reaction 5-(methylsulfanyl)-alpha-D-ribose 1-phosphate = 5-(methylsulfanyl)-D-ribulose 1-phosphate. Its pathway is amino-acid biosynthesis; L-methionine biosynthesis via salvage pathway; L-methionine from S-methyl-5-thio-alpha-D-ribose 1-phosphate: step 1/6. In terms of biological role, catalyzes the interconversion of methylthioribose-1-phosphate (MTR-1-P) into methylthioribulose-1-phosphate (MTRu-1-P). The chain is Methylthioribose-1-phosphate isomerase from Xanthomonas euvesicatoria pv. vesicatoria (strain 85-10) (Xanthomonas campestris pv. vesicatoria).